The primary structure comprises 72 residues: Translation initiation factor IF-1 (72 aa).

An S1-like domain is found at Met1–Lys72.

Belongs to the IF-1 family. In terms of assembly, component of the 30S ribosomal translation pre-initiation complex which assembles on the 30S ribosome in the order IF-2 and IF-3, IF-1 and N-formylmethionyl-tRNA(fMet); mRNA recruitment can occur at any time during PIC assembly.

It localises to the cytoplasm. In terms of biological role, one of the essential components for the initiation of protein synthesis. Stabilizes the binding of IF-2 and IF-3 on the 30S subunit to which N-formylmethionyl-tRNA(fMet) subsequently binds. Helps modulate mRNA selection, yielding the 30S pre-initiation complex (PIC). Upon addition of the 50S ribosomal subunit IF-1, IF-2 and IF-3 are released leaving the mature 70S translation initiation complex. This is Translation initiation factor IF-1 from Albidiferax ferrireducens (strain ATCC BAA-621 / DSM 15236 / T118) (Rhodoferax ferrireducens).